The primary structure comprises 197 residues: MSSAPAQGPAPASLTLWDEEDFQGRRCRLLSDCANIGERGGLRRVRSVKVENGAWVAFEYPDFQGQQFILEKGDYPRWSAWSGSAGHHSDQLLSFRPVLCANHSDSRVTLFEGENFQGCKFELNDDYPSLPSMGWASKDVGSLKVSSGAWVAYQYPGYRGYQYVLERDHHSGEFRNYSEFGTQAHTGQLQSIRRVQH.

Residues 1–11 (MSSAPAQGPAP) form an N-terminal arm region. 2 consecutive Beta/gamma crystallin 'Greek key' domains span residues 12 to 52 (ASLT…KVEN) and 53 to 99 (GAWV…RPVL). Residues 100–105 (CANHSD) form a connecting peptide region. Beta/gamma crystallin 'Greek key' domains are found at residues 106 to 147 (SRVT…KVSS) and 148 to 196 (GAWV…RRVQ).

Belongs to the beta/gamma-crystallin family. Homo/heterodimer, or complexes of higher-order. The structure of beta-crystallin oligomers seems to be stabilized through interactions between the N-terminal arms.

Crystallins are the dominant structural components of the vertebrate eye lens. The polypeptide is Beta-crystallin A2 (CRYBA2) (Bos taurus (Bovine)).